Consider the following 129-residue polypeptide: Follitropin subunit beta (129 aa).

The signal sequence occupies residues 1-20; that stretch reads MKSVQFCFLFCCWRAICCRS. 6 cysteine pairs are disulfide-bonded: Cys21-Cys69, Cys35-Cys84, Cys38-Cys122, Cys46-Cys100, Cys50-Cys102, and Cys105-Cys112. Asn25 and Asn42 each carry an N-linked (GlcNAc...) asparagine glycan.

It belongs to the glycoprotein hormones subunit beta family. Heterodimer. The active follitropin is a heterodimer composed of an alpha chain/CGA shared with other hormones and a unique beta chain/FSHB shown here.

The protein resides in the secreted. Together with the alpha chain CGA constitutes follitropin, the follicle-stimulating hormone, and provides its biological specificity to the hormone heterodimer. Binds FSHR, a G protein-coupled receptor, on target cells to activate downstream signaling pathways. Follitropin is involved in follicle development and spermatogenesis in reproductive organs. The protein is Follitropin subunit beta (FSHB) of Bubalus bubalis (Domestic water buffalo).